The chain runs to 271 residues: Hydroxyethylthiazole kinase (271 aa).

Position 46 (methionine 46) interacts with substrate. 2 residues coordinate ATP: arginine 122 and threonine 169. Glycine 196 provides a ligand contact to substrate.

The protein belongs to the Thz kinase family. Mg(2+) serves as cofactor.

It catalyses the reaction 5-(2-hydroxyethyl)-4-methylthiazole + ATP = 4-methyl-5-(2-phosphooxyethyl)-thiazole + ADP + H(+). The protein operates within cofactor biosynthesis; thiamine diphosphate biosynthesis; 4-methyl-5-(2-phosphoethyl)-thiazole from 5-(2-hydroxyethyl)-4-methylthiazole: step 1/1. Catalyzes the phosphorylation of the hydroxyl group of 4-methyl-5-beta-hydroxyethylthiazole (THZ). The sequence is that of Hydroxyethylthiazole kinase from Alkaliphilus oremlandii (strain OhILAs) (Clostridium oremlandii (strain OhILAs)).